The chain runs to 1306 residues: Disease resistance protein Roq1 (1306 aa).

The 170-residue stretch at 10 to 179 folds into the TIR domain; the sequence is RSYDVFLSFR…QILKDIFDKF (170 aa). Residues 19-24 and Gly52 each bind NAD(+); that span reads RGEDTR. Glu86 is a catalytic residue. In terms of domain architecture, NB-ARC spans 198 to 417; that stretch reads KKLSSLLRMD…IDRLKDNPEG (220 aa). LRR repeat units follow at residues 200–224, 252–275, 417–440, 599–622, 645–669, 670–693, 716–739, 741–763, 784–807, 808–831, 832–857, 878–902, 904–926, 927–949, 961–983, 987–1010, 1013–1036, and 1045–1070; these read LSSL…GVGK, LQHH…EFVD, GEIM…IFLD, PSKL…AKRL, ITNL…VGFL, KNLI…IQSE, MTHL…IEHL, SLEN…IWRF, SNCT…IGNL, TSLN…IWGL, TSLT…AINH, LDLL…IWML, FLRI…LGHL, EHLE…VARL, FAIG…VFGS, LGSV…MNQL, LEYL…SIKE, and LRIM…EYQN.

It belongs to the disease resistance TIR-NB-LRR family. As to quaternary structure, homodimer.

It catalyses the reaction NAD(+) + H2O = ADP-D-ribose + nicotinamide + H(+). It carries out the reaction NAD(+) = 2'cADPR + nicotinamide + H(+). Disease resistance (R) protein that specifically recognizes the Xanthomonas and Pseudomonas effector proteins XopQ and HopQ1, and triggers cell death. An NAD(+) hydrolase (NADase): in response to activation, catalyzes cleavage of NAD(+) into ADP-D-ribose (ADPR) and nicotinamide; NAD(+) cleavage triggers a defense system that promotes cell death. Makes small amounts of 2' cyclic ADPR (2'cADPR). This chain is Disease resistance protein Roq1, found in Nicotiana benthamiana.